The following is a 21-amino-acid chain: Protein YmjD (21 aa).

This Escherichia coli (strain K12) protein is Protein YmjD (ymjD).